Reading from the N-terminus, the 122-residue chain is Large ribosomal subunit protein uL14 (122 aa).

The protein belongs to the universal ribosomal protein uL14 family. As to quaternary structure, part of the 50S ribosomal subunit. Forms a cluster with proteins L3 and L19. In the 70S ribosome, L14 and L19 interact and together make contacts with the 16S rRNA in bridges B5 and B8.

In terms of biological role, binds to 23S rRNA. Forms part of two intersubunit bridges in the 70S ribosome. In Ruegeria pomeroyi (strain ATCC 700808 / DSM 15171 / DSS-3) (Silicibacter pomeroyi), this protein is Large ribosomal subunit protein uL14.